Here is a 413-residue protein sequence, read N- to C-terminus: Histidine--tRNA ligase (413 aa).

The protein belongs to the class-II aminoacyl-tRNA synthetase family. As to quaternary structure, homodimer.

The protein localises to the cytoplasm. The catalysed reaction is tRNA(His) + L-histidine + ATP = L-histidyl-tRNA(His) + AMP + diphosphate + H(+). The protein is Histidine--tRNA ligase of Neorickettsia sennetsu (strain ATCC VR-367 / Miyayama) (Ehrlichia sennetsu).